The chain runs to 439 residues: uncharacterized protein (439 aa).

Disordered regions lie at residues 1–36 (MRPG…SKQA), 126–157 (SRTG…GVPI), and 411–439 (FRSD…AVPR).

This is an uncharacterized protein from Streptomyces fradiae (Streptomyces roseoflavus).